Reading from the N-terminus, the 1011-residue chain is MTSVLDVTNRDRLIESESLAARTLQERLRLVEEVLVDVLAAESGQELVDLLRRLGALSSPEGHVLHAPEGELLKVIESLELNEAIRAARAFNLYFQIINIVEQHYEQQYNRERAAQEGLRRRSVMSEPISGVSGEGFPLPHTAANATDVRSGPSERLEHSLYEAIPATQQYGSFAWLFPRLQMLNVPPRHIQKLLDQLDIKLVFTAHPTEIVRQTIRDKQRRVARLLEQLDVLEGASPHLTDWNAQTLRAQLMEEIRLWWRTDELHQFKPEVLDEVEYTLHYFKEVIFAVIPKLYRRLEQSLHETFPALQPPRHRFCRFGSWVGGDRDGNPYVKPEVTWQTACYQRNLVLEEYIKSVERLINLLSLSLHWCDVLPDLLDSLEQDQRQLPSIYEQYAVRYRQEPYRLKLAYVLKRLQNTRDRNRALQTYCIRRNEAEELNNGQFYRHGEEFLAELLLIQRNLKETGLACRELDDLICQVEVFGFNLAALDIRQESTCHAEALNEITAYLGILPCPYTELSEAERTRWLLSELSTRRPLIPGELPFSDRTNEIIETFRMVRQLQQEFGTDLCNTYIISMSHEVSDLLEVLLFAKEAGLFDPATGASTLQAIPLFETVEDLKHAPAVLTQLFSLPFCRSYLGSNSTPFLQEVMLGYSDSNKDSGFLSSNWEIYKAQQQLQKIAESFGFQLRIFHGRGGSVGRGGGPAYAAILAQPAQTIKGRIKITEQGEVLASKYSLPELALFNLETVATAVIQASLLRSSIDEIEPWHEIMEELATRSRQCYRHLIYEQPEFIEFFNEVTPIQEISQLQISSRPTRRGGKKTLESLRAIPWVFSWTQTRFLLPAWYGVGTALKEFLEEKPAEHLSLLRYFYYKWPFFRMVISKVEMTLAKVDLEIARYYVQELSQPQNREAFCRLYDQIAQEYRLTTELVLTITGHERLLDGDPALQRSVQLRNRTIVPLGFLQVSLLKRLRQHNSQTTSGAILRSRYGRGELLRGALLTINGIAAGMRNTG.

Residues His207 and Lys658 contribute to the active site.

The protein belongs to the PEPCase type 1 family. Mg(2+) is required as a cofactor.

The enzyme catalyses oxaloacetate + phosphate = phosphoenolpyruvate + hydrogencarbonate. Forms oxaloacetate, a four-carbon dicarboxylic acid source for the tricarboxylic acid cycle. This Thermosynechococcus vestitus (strain NIES-2133 / IAM M-273 / BP-1) protein is Phosphoenolpyruvate carboxylase (ppc).